The primary structure comprises 73 residues: Large ribosomal subunit protein bL31 (73 aa).

The protein belongs to the bacterial ribosomal protein bL31 family. Type A subfamily. In terms of assembly, part of the 50S ribosomal subunit.

Binds the 23S rRNA. This chain is Large ribosomal subunit protein bL31, found in Mesorhizobium japonicum (strain LMG 29417 / CECT 9101 / MAFF 303099) (Mesorhizobium loti (strain MAFF 303099)).